A 295-amino-acid chain; its full sequence is G1/S-specific cyclin-D1 (295 aa).

The region spanning 28 to 152 (LRAMLKAEET…LLVNKLKWNL (125 aa)) is the Cyclin N-terminal domain. The interval 262-295 (AQQNMDPKAAEEEEEEEEEVDLACTPTDVRDVDI) is disordered. K269 participates in a covalent cross-link: Glycyl lysine isopeptide (Lys-Gly) (interchain with G-Cter in ubiquitin). Over residues 272–282 (EEEEEEEEEVD) the composition is skewed to acidic residues. T286 carries the phosphothreonine modification.

It belongs to the cyclin family. Cyclin D subfamily. As to quaternary structure, interacts with either CDK4 or CDK6 protein kinase to form a serine/threonine kinase holoenzyme complex. The cyclin subunit imparts substrate specificity to the complex. Component of the ternary complex CCND1/CDK4/CDKN1B required for nuclear translocation and modulation of CDK4-mediated kinase activity. Interacts directly with CDKN1B. Can form similar complexes with either CDKN1A or CDKN2A. Interacts with UHRF2; the interaction ubiquitinates CCND1 and appears to occur independently of phosphorylation. Interacts with USP2. Interacts (via cyclin N-terminal domain) with INSM1 (via N-terminal region); the interaction competes with the binding of CCND1 to CDK4 during cell cycle progression and inhibits CDK4 activity. Interacts with CDK4; the interaction is prevented with the binding of CCND1 to INSM1 during cell cycle progression. In terms of processing, phosphorylation at Thr-286 by MAP kinases is required for ubiquitination and degradation by the DCX(AMBRA1) complex. It also plays an essential role for recognition by the FBXO31 component of SCF (SKP1-cullin-F-box) protein ligase complex following DNA damage. Ubiquitinated at Lys-269 by the DCX(AMBRA1) complex during the transition from G1 to S cell phase, leading to its degradation: ubiquitination is dependent on Thr-286 phosphorylation. The DCX(AMBRA1) complex represents the major regulator of CCND1 stability during the G1/S transition. Also ubiquitinated by the SCF(FBXO4) and Cul7-RING(FBXW8) ubiquitin-protein ligase complexes. Following DNA damage it is ubiquitinated by the SCF(FBXO31) protein ligase complex. SCF(FBXO31) ubiquitination is dependent on Thr-286 phosphorylation. Ubiquitinated also by UHRF2 apparently in a phosphorylation-independent manner. Ubiquitination leads to its degradation and G1 arrest. Deubiquitinated by USP2; leading to its stabilization.

The protein resides in the nucleus. The protein localises to the cytoplasm. Its subcellular location is the nucleus membrane. Regulatory component of the cyclin D1-CDK4 (DC) complex that phosphorylates and inhibits members of the retinoblastoma (RB) protein family including RB1 and regulates the cell-cycle during G(1)/S transition. Phosphorylation of RB1 allows dissociation of the transcription factor E2F from the RB/E2F complex and the subsequent transcription of E2F target genes which are responsible for the progression through the G(1) phase. Hypophosphorylates RB1 in early G(1) phase. Cyclin D-CDK4 complexes are major integrators of various mitogenenic and antimitogenic signals. Also a substrate for SMAD3, phosphorylating SMAD3 in a cell-cycle-dependent manner and repressing its transcriptional activity. Component of the ternary complex, cyclin D1/CDK4/CDKN1B, required for nuclear translocation and activity of the cyclin D-CDK4 complex. Exhibits transcriptional corepressor activity with INSM1 on the NEUROD1 and INS promoters in a cell cycle-independent manner. This is G1/S-specific cyclin-D1 from Homo sapiens (Human).